The chain runs to 258 residues: 6-carboxyhexanoate--CoA ligase (258 aa).

The protein belongs to the BioW family. In terms of assembly, homodimer. Mg(2+) serves as cofactor.

It carries out the reaction heptanedioate + ATP + CoA = 6-carboxyhexanoyl-CoA + AMP + diphosphate. The protein operates within metabolic intermediate metabolism; pimeloyl-CoA biosynthesis; pimeloyl-CoA from pimelate: step 1/1. Catalyzes the transformation of pimelate into pimeloyl-CoA with concomitant hydrolysis of ATP to AMP. This Bacillus subtilis (strain BSn5) protein is 6-carboxyhexanoate--CoA ligase.